We begin with the raw amino-acid sequence, 190 residues long: uncharacterized protein (190 aa).

The helical transmembrane segment at 1 to 21 threads the bilayer; the sequence is MLVMSITFSFVAVALLVYFYV. The span at 103–114 shows a compositional bias: basic and acidic residues; that stretch reads REEVCARPEHRS. Residues 103–130 are disordered; that stretch reads REEVCARPEHRSAPSRAGSSAAKPTPTK.

It to B.burgdorferi BB0265.

The protein localises to the membrane. This is an uncharacterized protein from Treponema pallidum (strain Nichols).